The sequence spans 380 residues: Queuine tRNA-ribosyltransferase (380 aa).

The active-site Proton acceptor is the Asp95. Substrate is bound by residues 95–99 (DSGGF), Asp149, Gln192, and Gly219. The segment at 250–256 (GVGSADA) is RNA binding. Asp269 (nucleophile) is an active-site residue. The segment at 274 to 278 (TRIAR) is RNA binding; important for wobble base 34 recognition. Residues Cys307, Cys309, Cys312, and His338 each contribute to the Zn(2+) site.

This sequence belongs to the queuine tRNA-ribosyltransferase family. In terms of assembly, homodimer. Within each dimer, one monomer is responsible for RNA recognition and catalysis, while the other monomer binds to the replacement base PreQ1. It depends on Zn(2+) as a cofactor.

The enzyme catalyses 7-aminomethyl-7-carbaguanine + guanosine(34) in tRNA = 7-aminomethyl-7-carbaguanosine(34) in tRNA + guanine. It functions in the pathway tRNA modification; tRNA-queuosine biosynthesis. In terms of biological role, catalyzes the base-exchange of a guanine (G) residue with the queuine precursor 7-aminomethyl-7-deazaguanine (PreQ1) at position 34 (anticodon wobble position) in tRNAs with GU(N) anticodons (tRNA-Asp, -Asn, -His and -Tyr). Catalysis occurs through a double-displacement mechanism. The nucleophile active site attacks the C1' of nucleotide 34 to detach the guanine base from the RNA, forming a covalent enzyme-RNA intermediate. The proton acceptor active site deprotonates the incoming PreQ1, allowing a nucleophilic attack on the C1' of the ribose to form the product. After dissociation, two additional enzymatic reactions on the tRNA convert PreQ1 to queuine (Q), resulting in the hypermodified nucleoside queuosine (7-(((4,5-cis-dihydroxy-2-cyclopenten-1-yl)amino)methyl)-7-deazaguanosine). This Lactiplantibacillus plantarum (strain ATCC BAA-793 / NCIMB 8826 / WCFS1) (Lactobacillus plantarum) protein is Queuine tRNA-ribosyltransferase.